Consider the following 226-residue polypeptide: Octanoyltransferase (226 aa).

One can recognise a BPL/LPL catalytic domain in the interval 34–216 (GEANELVWLL…AWTEAFGPVR (183 aa)). Substrate-binding positions include 73 to 80 (RGGEYTYH), 145 to 147 (AIG), and 158 to 160 (GIA). Cysteine 176 acts as the Acyl-thioester intermediate in catalysis.

Belongs to the LipB family.

It is found in the cytoplasm. It catalyses the reaction octanoyl-[ACP] + L-lysyl-[protein] = N(6)-octanoyl-L-lysyl-[protein] + holo-[ACP] + H(+). It participates in protein modification; protein lipoylation via endogenous pathway; protein N(6)-(lipoyl)lysine from octanoyl-[acyl-carrier-protein]: step 1/2. Its function is as follows. Catalyzes the transfer of endogenously produced octanoic acid from octanoyl-acyl-carrier-protein onto the lipoyl domains of lipoate-dependent enzymes. Lipoyl-ACP can also act as a substrate although octanoyl-ACP is likely to be the physiological substrate. This Maricaulis maris (strain MCS10) (Caulobacter maris) protein is Octanoyltransferase.